A 49-amino-acid chain; its full sequence is uncharacterized protein (49 aa).

Residues 22–42 (AIVGISIMIIIAIGIYLIIEY) traverse the membrane as a helical segment.

It localises to the membrane. This is an uncharacterized protein from Methanocaldococcus jannaschii (strain ATCC 43067 / DSM 2661 / JAL-1 / JCM 10045 / NBRC 100440) (Methanococcus jannaschii).